A 258-amino-acid chain; its full sequence is Gamma-secretase subunit Aph-1b (258 aa).

A run of 7 helical transmembrane segments spans residues 3 to 23, 32 to 52, 70 to 90, 118 to 138, 161 to 181, 187 to 207, and 214 to 234; these read VAVF…LFMF, VIFL…SSLV, GLLI…RYGY, AYVS…VNIL, AFMT…FFEA, WWAL…TFVN, and LIPT…CAGG.

This sequence belongs to the APH-1 family. As to quaternary structure, component of the gamma-secretase complex, a complex composed of a presenilin homodimer (PSEN1 or PSEN2), nicastrin (NCSTN), APH1 and PEN2.

It localises to the membrane. In terms of biological role, essential subunit of the gamma-secretase complex, an endoprotease complex that catalyzes the intramembrane cleavage of integral proteins such as Notch receptors. It may represent a stabilizing cofactor for the presenilin homodimer that promotes the formation of a stable complex. This Danio rerio (Zebrafish) protein is Gamma-secretase subunit Aph-1b (aph1b).